The following is a 757-amino-acid chain: Relaxin receptor 1 (757 aa).

Residues 1 to 408 (MTSGSVFFYI…LENLLASIIQ (408 aa)) lie on the Extracellular side of the membrane. The 38-residue stretch at 26–63 (KCSLGYFPCGNITKCLPQLLHCNGVDDCGNQADEDNCG) folds into the LDL-receptor class A domain. 3 cysteine pairs are disulfide-bonded: Cys-27/Cys-40, Cys-34/Cys-53, and Cys-47/Cys-62. Asn-36 carries an N-linked (GlcNAc...) asparagine glycan. Residues Leu-45, Asn-48, Val-50, Asp-52, Asp-58, and Glu-59 each coordinate Ca(2+). The 37-residue stretch at 91-127 (ETPECLVGSVPVQCLCRGLELDCDETNLRAVPSVSSN) folds into the LRRNT domain. A glycan (N-linked (GlcNAc...) asparagine) is linked at Asn-127. LRR repeat units lie at residues 151–172 (DLQK…AFRG), 175–196 (SLTK…VFED), 199–220 (RLEW…TFYG), 223–244 (SLIL…PLCQ), 248–269 (RLHW…TLIS), 272–293 (NLTV…TFAP), 296–317 (KLDE…IFKD), 320–341 (ELSQ…QFDY), and 344–365 (KLKS…MFRP). N-linked (GlcNAc...) asparagine glycosylation is found at Asn-264 and Asn-272. N-linked (GlcNAc...) asparagine glycosylation occurs at Asn-325. Asn-368 is a glycosylation site (N-linked (GlcNAc...) asparagine). The helical transmembrane segment at 409–429 (RVFVWVVSAVTCFGNVFVICM) threads the bilayer. The Cytoplasmic segment spans residues 430 to 443 (RPYIRSENKLYAMS). Residues 444-464 (IISLCCADCLMGIYLFVIGGF) traverse the membrane as a helical segment. The Extracellular segment spans residues 465 to 486 (DLKFRGEYNKHAQLWMESTHCQ). The cysteines at positions 485 and 563 are disulfide-linked. The helical transmembrane segment at 487 to 507 (LVGSLAILSTEVSVLLLTFLT) threads the bilayer. Topologically, residues 508 to 527 (LEKYICIVYPFRCVRPGKCR) are cytoplasmic. Residues 528–548 (TITVLILIWITGFIVAFIPLS) form a helical membrane-spanning segment. At 549 to 577 (NKEFFKNYYGTNGVCFPLHSEDTESIGAQ) the chain is on the extracellular side. A helical transmembrane segment spans residues 578-598 (VYSVAIFLGINLAAFIIIVFS). Residues 599-629 (YGSMFYSVHQSAITATEIRNQVKKEMILAKR) are Cytoplasmic-facing. The chain crosses the membrane as a helical span at residues 630–650 (FFFIVFTDALCWIPIFVVKFL). The Extracellular segment spans residues 651–660 (SLLQVEIPGT). A helical membrane pass occupies residues 661–681 (ITSWVVIFILPINSALNPILY). Residues 682–757 (TLTTRPFKEM…SQSTRLNSYS (76 aa)) are Cytoplasmic-facing.

It belongs to the G-protein coupled receptor 1 family. In terms of assembly, interacts with C1QTNF8.

It localises to the cell membrane. Its function is as follows. Receptor for relaxins. The activity of this receptor is mediated by G proteins leading to stimulation of adenylate cyclase and an increase of cAMP. Binding of the ligand may also activate a tyrosine kinase pathway that inhibits the activity of a phosphodiesterase that degrades cAMP. In Pongo abelii (Sumatran orangutan), this protein is Relaxin receptor 1 (RXFP1).